Here is a 368-residue protein sequence, read N- to C-terminus: N-acetylneuraminate epimerase (368 aa).

Residues 1–19 form the signal peptide; that stretch reads MNKTITALAILMASFAANA. Kelch repeat units lie at residues 40-84, 86-137, 139-173, 174-219, 222-265, 287-336, and 338-367; these read TVYI…AFID, NLYV…FVHN, KAYVTGGVNQNIFNGYFEDLNEAGKDSTAVDKINA, HYFD…VNKG, TWLI…VAGG, ENYQ…PWNN, and LLIIGGETAGGKAVTDSVLISVKDNKVTVQ. Catalysis depends on E228, which acts as the Proton acceptor.

This sequence belongs to the NanM family. Homodimer.

It localises to the periplasm. The enzyme catalyses N-acetyl-alpha-neuraminate = N-acetyl-beta-neuraminate. In terms of biological role, converts alpha-N-acetylneuranimic acid (Neu5Ac) to the beta-anomer, accelerating the equilibrium between the alpha- and beta-anomers. Probably facilitates sialidase-negative bacteria to compete successfully for limited amounts of extracellular Neu5Ac, which is likely taken up in the beta-anomer. In addition, the rapid removal of sialic acid from solution might be advantageous to the bacterium to damp down host responses. The sequence is that of N-acetylneuraminate epimerase from Escherichia coli O157:H7.